A 242-amino-acid chain; its full sequence is Glutathione S-transferase 3 (242 aa).

The GST N-terminal domain occupies 1–79; sequence MIVLHHLKNS…HLVRKYGPSF (79 aa). In terms of domain architecture, GST C-terminal spans 85–234; it reads DVAELEKYEL…ERYSHPPTPP (150 aa). Residue serine 228 is modified to Phosphoserine. Phosphothreonine is present on threonine 232.

Belongs to the GST superfamily. In terms of assembly, interacts with sad1.

It is found in the cytoplasm. The enzyme catalyses RX + glutathione = an S-substituted glutathione + a halide anion + H(+). Functionally, may have a role in the detoxification of various heavy metals. This chain is Glutathione S-transferase 3 (gst3), found in Schizosaccharomyces pombe (strain 972 / ATCC 24843) (Fission yeast).